A 264-amino-acid chain; its full sequence is Proteasome subunit beta type-5 (264 aa).

Residues 1–59 (MALASVLQRPMPVNQHGFFGLGGGADLLDLGPGSPGDGLSLAAPSWGVPEEPRIEMLHG) constitute a propeptide, removed in mature form. Residue Thr-60 is the Nucleophile of the active site. Residue Ala-108 participates in bortezomib binding.

This sequence belongs to the peptidase T1B family. As to quaternary structure, the 26S proteasome consists of a 20S proteasome core and two 19S regulatory subunits. The 20S proteasome core is a barrel-shaped complex made of 28 subunits that are arranged in four stacked rings. The two outer rings are each formed by seven alpha subunits, and the two inner rings are formed by seven beta subunits. The proteolytic activity is exerted by three beta-subunits PSMB5, PSMB6 and PSMB7. Directly interacts with POMP. Interacts with ABCB1 and TAP1. In terms of tissue distribution, expressed in uterus at the embryo implantation site.

The protein localises to the cytoplasm. The protein resides in the nucleus. It carries out the reaction Cleavage of peptide bonds with very broad specificity.. Its function is as follows. Component of the 20S core proteasome complex involved in the proteolytic degradation of most intracellular proteins. This complex plays numerous essential roles within the cell by associating with different regulatory particles. Associated with two 19S regulatory particles, forms the 26S proteasome and thus participates in the ATP-dependent degradation of ubiquitinated proteins. The 26S proteasome plays a key role in the maintenance of protein homeostasis by removing misfolded or damaged proteins that could impair cellular functions, and by removing proteins whose functions are no longer required. Associated with the PA200 or PA28, the 20S proteasome mediates ubiquitin-independent protein degradation. This type of proteolysis is required in several pathways including spermatogenesis (20S-PA200 complex) or generation of a subset of MHC class I-presented antigenic peptides (20S-PA28 complex). Within the 20S core complex, PSMB5 displays a chymotrypsin-like activity. The polypeptide is Proteasome subunit beta type-5 (Psmb5) (Mus musculus (Mouse)).